We begin with the raw amino-acid sequence, 206 residues long: Dephospho-CoA kinase (206 aa).

The 197-residue stretch at 4–200 (IVALTGGIGS…HRYLKLATAA (197 aa)) folds into the DPCK domain. 12 to 17 (GSGKST) is a binding site for ATP.

It belongs to the CoaE family.

The protein localises to the cytoplasm. The catalysed reaction is 3'-dephospho-CoA + ATP = ADP + CoA + H(+). It participates in cofactor biosynthesis; coenzyme A biosynthesis; CoA from (R)-pantothenate: step 5/5. Its function is as follows. Catalyzes the phosphorylation of the 3'-hydroxyl group of dephosphocoenzyme A to form coenzyme A. This Yersinia pestis protein is Dephospho-CoA kinase.